The sequence spans 259 residues: Uridylate kinase (259 aa).

Residue 21-24 (KLSG) participates in ATP binding. Glycine 63 serves as a coordination point for UMP. The ATP site is built by glycine 64 and arginine 68. UMP-binding positions include aspartate 83 and 144–151 (TGNPYFTT). The ATP site is built by threonine 171, phenylalanine 177, and aspartate 180.

This sequence belongs to the UMP kinase family. As to quaternary structure, homohexamer.

It localises to the cytoplasm. The enzyme catalyses UMP + ATP = UDP + ADP. It functions in the pathway pyrimidine metabolism; CTP biosynthesis via de novo pathway; UDP from UMP (UMPK route): step 1/1. Inhibited by UTP. In terms of biological role, catalyzes the reversible phosphorylation of UMP to UDP. The sequence is that of Uridylate kinase from Salinibacter ruber (strain DSM 13855 / M31).